We begin with the raw amino-acid sequence, 241 residues long: uncharacterized protein (241 aa).

The next 6 membrane-spanning stretches (helical) occupy residues Met-1–Leu-21, Phe-43–Leu-63, Leu-75–Ile-95, Ile-108–Leu-128, Val-160–Leu-180, and Ile-200–Gly-220.

It to M.jannaschii MJ0871, MJ0880 and MJ1556.

The protein localises to the cell membrane. This is an uncharacterized protein from Methanocaldococcus jannaschii (strain ATCC 43067 / DSM 2661 / JAL-1 / JCM 10045 / NBRC 100440) (Methanococcus jannaschii).